We begin with the raw amino-acid sequence, 302 residues long: HTH-type transcriptional regulator GbpR (302 aa).

Residues 1 to 56 (MSHLRMLVMIEEHGQVSAAAAAMNMTQPAASRMLSEMEAIVKSPLCQRASRGVVLT) form the HTH lysR-type domain. Residues 16–35 (VSAAAAAMNMTQPAASRMLS) constitute a DNA-binding region (H-T-H motif).

It belongs to the LysR transcriptional regulatory family.

Functionally, activator of the expression of chvE when bound to its inducer and represses its expression in the absence of inducer (L-arabinose, D-fucose or D-galactose). Negatively regulates its own expression. In Rhizobium radiobacter (Agrobacterium tumefaciens), this protein is HTH-type transcriptional regulator GbpR (gbpR).